The following is a 393-amino-acid chain: Serine/threonine-protein kinase US3 homolog (393 aa).

In terms of domain architecture, Protein kinase spans Phe93–Phe378. Residues Phe99–Ala107 and Lys122 contribute to the ATP site. Asp206 serves as the catalytic Proton acceptor.

Belongs to the protein kinase superfamily. Ser/Thr protein kinase family. Phosphorylated by ORF47; this phosphorylation regulates subsequent phosphorylation of proteins 24 and 27 by ORF66. Autophosphorylated.

Its subcellular location is the host cytoplasm. It localises to the host nucleus. The catalysed reaction is L-seryl-[protein] + ATP = O-phospho-L-seryl-[protein] + ADP + H(+). It catalyses the reaction L-threonyl-[protein] + ATP = O-phospho-L-threonyl-[protein] + ADP + H(+). Functionally, multifunctional serine/threonine kinase that plays a role in several processes including egress of virus particles from the nucleus, modulation of the actin cytoskeleton and inhibition of apoptosis. Phosphorylates proteins 24 and 27, two critical regulators of capsid budding from nucleus to endoplasmic reticulum, thereby facilitating virion egress. Modulates and redistributes host components of the nuclear envelope, including LMNA, emerin/EMD and the nuclear matrix protein MATR3. Phosphorylates envelope glycoprotein B (gB), probably to direct it to the cell surface. Promotes virus intracellular spread by restructuring host cell cytoskeleton. Blocks host apoptosis to extend cell survival and allow efficient viral replication. Promotes viral gene expression by phosphorylating host HDAC2 to reduce viral genome silencing. Down-regulates class I major histocompatibility complex (MHC-I) surface expression. Additionally, phosphorylates IE62 and targets it to the cytoplasm. The nuclear exclusion of IE62 enables the packaging of abundant levels of IE62 into virions. This chain is Serine/threonine-protein kinase US3 homolog (66), found in Varicella-zoster virus (strain Dumas) (HHV-3).